Consider the following 347-residue polypeptide: Mitochondrial carrier protein rim2 (347 aa).

3 Solcar repeats span residues 32-136 (PPPL…GKRI), 146-234 (ENSQ…FKHA), and 256-345 (LDWG…IMHF). Helical transmembrane passes span 38–58 (FIAG…LDVV), 105–125 (TRAL…ARSI), 152–172 (LMAA…IWLV), 214–233 (SLLG…KFKH), 262–282 (LGGA…HEVV), and 317–338 (LYGG…LFGS).

The protein localises to the mitochondrion inner membrane. It carries out the reaction 5-methyl-UTP(out) + UTP(in) = 5-methyl-UTP(in) + UTP(out). Its function is as follows. Mitochondrial transporter that imports/exports pyrimidine nucleotides into and from mitochondria. Selectively transports uridine, thymidine, and cytosine (deoxy)nucleoside di- and triphosphates by an antiport mechanism. Also transports, with lower efficiency, uridine, thymidine, and cytosine (deoxy)nucleoside monophosphates as well as guanosine (deoxy)nucleoside di- and triphosphate. May import (deoxy)nucleoside triphosphates in exchange for intramitochondrial (deoxy)nucleoside monophosphates, thus providing precursors necessary for de novo synthesis of mitochondrial DNA and RNA while exporting products of their catabolism. Mediates the transport of iron and other divalent metal ions like copper and zinc across the mitochondrial inner membrane in a pyrimidine nucleotide-dependent fashion. Catalyzes the co-import of pyrimidine nucleotides and divalent metal ions including ferrous iron. Participates in mitochondrial genome maintenance, regulation of mitochondrial membrane potential and mitochondrial respiration. The sequence is that of Mitochondrial carrier protein rim2 (rim2) from Schizosaccharomyces pombe (strain 972 / ATCC 24843) (Fission yeast).